The sequence spans 328 residues: Cytochrome f (328 aa).

The first 44 residues, 1–44 (MRTPDFSAIWQASKQLTARIILLAFATFALYVFHDLAFPQGAAA), serve as a signal peptide directing secretion. 4 residues coordinate heme: Tyr-45, Cys-66, Cys-69, and His-70. A helical membrane pass occupies residues 294-314 (IKGLMVFLAGIMLAQILLVIK).

Belongs to the cytochrome f family. In terms of assembly, the 4 large subunits of the cytochrome b6-f complex are cytochrome b6, subunit IV (17 kDa polypeptide, PetD), cytochrome f and the Rieske protein, while the 4 small subunits are PetG, PetL, PetM and PetN. The complex functions as a dimer. Heme serves as cofactor.

Its subcellular location is the cellular thylakoid membrane. Its function is as follows. Component of the cytochrome b6-f complex, which mediates electron transfer between photosystem II (PSII) and photosystem I (PSI), cyclic electron flow around PSI, and state transitions. This is Cytochrome f from Rippkaea orientalis (strain PCC 8801 / RF-1) (Cyanothece sp. (strain PCC 8801)).